A 193-amino-acid chain; its full sequence is Ion-translocating oxidoreductase complex subunit A (193 aa).

The next 6 helical transmembrane spans lie at 5–25 (ILLI…FLGL), 39–59 (IGMG…AYLV), 65–85 (IPLE…AVIV), 102–122 (LLGI…VALL), 134–154 (VLYG…FSAL), and 171–191 (SIAL…TGLV).

The protein belongs to the NqrDE/RnfAE family. In terms of assembly, the complex is composed of six subunits: RnfA, RnfB, RnfC, RnfD, RnfE and RnfG.

It localises to the cell inner membrane. Its function is as follows. Part of a membrane-bound complex that couples electron transfer with translocation of ions across the membrane. The protein is Ion-translocating oxidoreductase complex subunit A of Glaesserella parasuis serovar 5 (strain SH0165) (Haemophilus parasuis).